A 526-amino-acid chain; its full sequence is Fusicoccadiene 8-ol C-16-hydroxylase (526 aa).

A helical transmembrane segment spans residues 34–56 (AFVGFSVLGLTLLFSKLFYNAYL). N-linked (GlcNAc...) asparagine glycosylation is found at asparagine 309, asparagine 418, and asparagine 434. A heme-binding site is contributed by cysteine 470.

This sequence belongs to the cytochrome P450 family. Heme serves as cofactor.

The protein resides in the membrane. It functions in the pathway mycotoxin biosynthesis. In terms of biological role, cytochrome P450 monooxygenase; part of the 2 gene clusters that mediate the biosynthesis of fusicoccins, diterpene glucosides that display phytohormone-like activity and function as potent activators of plasma membrane H(+)-ATPases in plants by modifying 14-3-3 proteins and cause the plant disease constriction canker. The first step in the pathway is performed by the fusicoccadiene synthase PaFS that possesses both prenyl transferase and terpene cyclase activity, converting isopentenyl diphosphate and dimethylallyl diphosphate into geranylgeranyl diphosphate (GGDP) and successively converting GGDP into fusicocca-2,10(14)-diene, a precursor for fusicoccin H. The second step is the oxidation at the C-8 position by the cytochrome P450 monooxygenase PaP450-2 to yield fusicocca-2,10(14)-diene-8-beta-ol. The cytochrome P450 monooxygenase PaP450-1 then catalyzes the hydroxylation at the C-16 position to produce fusicocca-2,10(14)-diene-8-beta,16-diol. The dioxygenase fc-dox then catalyzes the 16-oxydation of fusicocca-2,10(14)-diene-8-beta,16-diol to yield an aldehyde (8-beta-hydroxyfusicocca-1,10(14)-dien-16-al). The short-chain dehydrogenase/reductase fc-sdr catalyzes the reduction of the aldehyde to yield fusicocca-1,10(14)-diene-8-beta,16-diol. The next step is the hydroxylation at C-9 performed by the cytochrome P450 monooxygenase PaP450-3 that leads to fusicoccin H aglycon which is glycosylated to fusicoccin H by the O-glycosyltransferase PaGT. Hydroxylation at C-12 by the cytochrome P450 monooxygenase PaP450-4 leads then to the production of fusicoccin Q and is followed by methylation by the O-methyltransferase PaMT to yield fusicoccin P. Fusicoccin P is further converted to fusicoccin J via prenylation by the O-glucose prenyltransferase PaPT. Cytochrome P450 monooxygenase PaP450-5 then performs hydroxylation at C-19 to yield dideacetyl-fusicoccin A which is acetylated to 3'-O-deacetyl-fusicoccin A by the O-acetyltransferase PaAT-2. Finally, a another acetylation by the O-acetyltransferase PaAT-1 yields fusicoccin A. The protein is Fusicoccadiene 8-ol C-16-hydroxylase of Phomopsis amygdali (Fusicoccum amygdali).